Consider the following 270-residue polypeptide: Type III pantothenate kinase (270 aa).

Position 11–18 (11–18) interacts with ATP; that stretch reads DAGNSRIK. Substrate is bound by residues Tyr96 and 103-106; that span reads GSDR. The active-site Proton acceptor is the Asp105. Thr129 contacts ATP. Thr195 contributes to the substrate binding site.

The protein belongs to the type III pantothenate kinase family. In terms of assembly, homodimer. Requires NH4(+) as cofactor. K(+) is required as a cofactor.

It is found in the cytoplasm. It catalyses the reaction (R)-pantothenate + ATP = (R)-4'-phosphopantothenate + ADP + H(+). It functions in the pathway cofactor biosynthesis; coenzyme A biosynthesis; CoA from (R)-pantothenate: step 1/5. Catalyzes the phosphorylation of pantothenate (Pan), the first step in CoA biosynthesis. The sequence is that of Type III pantothenate kinase from Paraburkholderia phytofirmans (strain DSM 17436 / LMG 22146 / PsJN) (Burkholderia phytofirmans).